Consider the following 107-residue polypeptide: MTEKKNRREKKNPREAKVTFEGLVTEALPNGMFRVRLENDTIILGYISGKIRSSSIRILMGDRVKIEVSRYDSSKGRIIYRLPHKDSKRTEDSKDTEDLKDTKDSKD.

The region spanning 8 to 83 (REKKNPREAK…SKGRIIYRLP (76 aa)) is the S1-like domain. A disordered region spans residues 81 to 107 (RLPHKDSKRTEDSKDTEDLKDTKDSKD). The span at 83–107 (PHKDSKRTEDSKDTEDLKDTKDSKD) shows a compositional bias: basic and acidic residues.

Belongs to the IF-1 family. As to quaternary structure, component of the 30S ribosomal translation pre-initiation complex which assembles on the 30S ribosome in the order IF-2 and IF-3, IF-1 and N-formylmethionyl-tRNA(fMet); mRNA recruitment can occur at any time during PIC assembly.

The protein localises to the plastid. It is found in the chloroplast. Functionally, one of the essential components for the initiation of protein synthesis. Stabilizes the binding of IF-2 and IF-3 on the 30S subunit to which N-formylmethionyl-tRNA(fMet) subsequently binds. Helps modulate mRNA selection, yielding the 30S pre-initiation complex (PIC). Upon addition of the 50S ribosomal subunit IF-1, IF-2 and IF-3 are released leaving the mature 70S translation initiation complex. The polypeptide is Translation initiation factor IF-1, chloroplastic (Saccharum hybrid (Sugarcane)).